The primary structure comprises 362 residues: Phosphoserine aminotransferase (362 aa).

An L-glutamate-binding site is contributed by arginine 42. Residues 76-77, tryptophan 102, threonine 154, aspartate 174, and glutamine 197 each bind pyridoxal 5'-phosphate; that span reads AR. The residue at position 198 (lysine 198) is an N6-(pyridoxal phosphate)lysine. Residue 239 to 240 coordinates pyridoxal 5'-phosphate; sequence NT.

Belongs to the class-V pyridoxal-phosphate-dependent aminotransferase family. SerC subfamily. In terms of assembly, homodimer. Pyridoxal 5'-phosphate is required as a cofactor.

Its subcellular location is the cytoplasm. It catalyses the reaction O-phospho-L-serine + 2-oxoglutarate = 3-phosphooxypyruvate + L-glutamate. The catalysed reaction is 4-(phosphooxy)-L-threonine + 2-oxoglutarate = (R)-3-hydroxy-2-oxo-4-phosphooxybutanoate + L-glutamate. It functions in the pathway amino-acid biosynthesis; L-serine biosynthesis; L-serine from 3-phospho-D-glycerate: step 2/3. Its pathway is cofactor biosynthesis; pyridoxine 5'-phosphate biosynthesis; pyridoxine 5'-phosphate from D-erythrose 4-phosphate: step 3/5. In terms of biological role, catalyzes the reversible conversion of 3-phosphohydroxypyruvate to phosphoserine and of 3-hydroxy-2-oxo-4-phosphonooxybutanoate to phosphohydroxythreonine. The chain is Phosphoserine aminotransferase from Buchnera aphidicola subsp. Cinara cedri (strain Cc).